We begin with the raw amino-acid sequence, 199 residues long: MTTLTAQQIACVYAWLAQLFSRELDDEQLTQIASAQMAEWFSLLKSEPPLVAAVNELENCIATLTVRDDARLELAADFCGLFLMTDKQAALPYASAYKQDEQEIKRLLVEAGMETSGNFNEPADHLAIYLELLSHLHFSLGEGTVPARRIDSLRQKTLTALWQWLPEFVARCRQYDSFGFYAALSQLLLVLVECDHQNR.

It belongs to the TorD/DmsD family. TorD subfamily.

It localises to the cytoplasm. Its function is as follows. Involved in the biogenesis of TorA. Acts on TorA before the insertion of the molybdenum cofactor and, as a result, probably favors a conformation of the apoenzyme that is competent for acquiring the cofactor. The polypeptide is Chaperone protein TorD (Escherichia coli (strain ATCC 8739 / DSM 1576 / NBRC 3972 / NCIMB 8545 / WDCM 00012 / Crooks)).